The sequence spans 341 residues: Guanine nucleotide-binding protein subunit beta (341 aa).

WD repeat units follow at residues 54–84 (GHLA…IVWD), 96–126 (LRSS…SIYS), 142–171 (GHTG…ALWN), 183–213 (GHTG…KLFD), 225–255 (GHES…RLFD), 269–299 (NIIC…NVWD), and 311–341 (GHDN…KIWN).

It belongs to the WD repeat G protein beta family. As to quaternary structure, g proteins are composed of 3 units, alpha, beta and gamma.

Functionally, guanine nucleotide-binding proteins (G proteins) are involved as a modulator or transducer in various transmembrane signaling systems. The beta and gamma chains are required for the GTPase activity, for replacement of GDP by GTP, and for G protein-effector interaction. This is Guanine nucleotide-binding protein subunit beta from Loligo forbesii (Veined squid).